The following is a 418-amino-acid chain: Tyrosine--tRNA ligase (418 aa).

An L-tyrosine-binding site is contributed by tyrosine 34. The 'HIGH' region motif lies at 39 to 48; that stretch reads PTADSLHLGH. Residues tyrosine 169 and glutamine 173 each contribute to the L-tyrosine site. The 'KMSKS' region signature appears at 229–233; sequence KFGKS. Residue lysine 232 coordinates ATP. The 67-residue stretch at 352–418 folds into the S4 RNA-binding domain; the sequence is LNIVDMLVTA…GKKKYAVLTY (67 aa).

Belongs to the class-I aminoacyl-tRNA synthetase family. TyrS type 1 subfamily. Homodimer.

The protein localises to the cytoplasm. The catalysed reaction is tRNA(Tyr) + L-tyrosine + ATP = L-tyrosyl-tRNA(Tyr) + AMP + diphosphate + H(+). Catalyzes the attachment of tyrosine to tRNA(Tyr) in a two-step reaction: tyrosine is first activated by ATP to form Tyr-AMP and then transferred to the acceptor end of tRNA(Tyr). This Streptococcus equi subsp. zooepidemicus (strain H70) protein is Tyrosine--tRNA ligase.